A 296-amino-acid chain; its full sequence is Transcription factor MYB72 (296 aa).

2 consecutive HTH myb-type domains span residues 11-63 (KNKV…INYL) and 64-118 (RPDV…KKRL). DNA-binding regions (H-T-H motif) lie at residues 39–63 (WRSL…INYL) and 91–114 (WSKI…NTHL). The segment at 118–144 (LTPSSSSSSLSSTHDQSTKADHDKNCD) is disordered. Residues 133 to 144 (QSTKADHDKNCD) show a composition bias toward basic and acidic residues.

As to quaternary structure, interacts with EIL3.

It is found in the nucleus. Involved in metal ions homeostasis, including iron ions (Fe) acquisition, via the regulation of NAS4 and NAS2 genes expression. Necessary for plant survival in alkaline soil where iron availability is greatly restricted. Involved in the up-regulation of several biosynthesis genes of secondary metabolites involved in iron uptake under conditions of iron deficiency. Triggers tolerance to nickel (Ni) and zinc (Zn) ions. Required in the roots during early signaling steps of rhizobacteria-mediated (e.g. P.fluorescens WCS417r) and beneficial fungi-mediated (e.g. T.asperellum T34) broad-spectrum induced systemic resistance (ISR) against several pathogens (e.g. P.syringae pv tomato, H.parasitica, P.cucumerina, A.brassicicola and B.cinerea) and implying enhanced callose deposition. Required for the induction of some genes (e.g. BGLU42) upon rhizobacteria-mediated ISR. The polypeptide is Transcription factor MYB72 (Arabidopsis thaliana (Mouse-ear cress)).